Consider the following 986-residue polypeptide: Bifunctional glutamine synthetase adenylyltransferase/adenylyl-removing enzyme (986 aa).

Positions 1–471 are adenylyl removase; it reads MAEAIERSLS…RYAQLFEQEA (471 aa). An adenylyl transferase region spans residues 475 to 986; that stretch reads TETGNLVFTG…RIFQGVVAAA (512 aa).

It belongs to the GlnE family. Mg(2+) is required as a cofactor.

It catalyses the reaction [glutamine synthetase]-O(4)-(5'-adenylyl)-L-tyrosine + phosphate = [glutamine synthetase]-L-tyrosine + ADP. The enzyme catalyses [glutamine synthetase]-L-tyrosine + ATP = [glutamine synthetase]-O(4)-(5'-adenylyl)-L-tyrosine + diphosphate. In terms of biological role, involved in the regulation of glutamine synthetase GlnA, a key enzyme in the process to assimilate ammonia. When cellular nitrogen levels are high, the C-terminal adenylyl transferase (AT) inactivates GlnA by covalent transfer of an adenylyl group from ATP to specific tyrosine residue of GlnA, thus reducing its activity. Conversely, when nitrogen levels are low, the N-terminal adenylyl removase (AR) activates GlnA by removing the adenylyl group by phosphorolysis, increasing its activity. The regulatory region of GlnE binds the signal transduction protein PII (GlnB) which indicates the nitrogen status of the cell. This is Bifunctional glutamine synthetase adenylyltransferase/adenylyl-removing enzyme from Rhizobium meliloti (strain 1021) (Ensifer meliloti).